Reading from the N-terminus, the 302-residue chain is Urease accessory protein UreD 2 (302 aa).

It belongs to the UreD family. As to quaternary structure, ureD, UreF and UreG form a complex that acts as a GTP-hydrolysis-dependent molecular chaperone, activating the urease apoprotein by helping to assemble the nickel containing metallocenter of UreC. The UreE protein probably delivers the nickel.

The protein localises to the cytoplasm. Its function is as follows. Required for maturation of urease via the functional incorporation of the urease nickel metallocenter. This Brucella ovis (strain ATCC 25840 / 63/290 / NCTC 10512) protein is Urease accessory protein UreD 2.